The primary structure comprises 394 residues: Dimethyladenosine transferase 2, mitochondrial (394 aa).

The N-terminal 19 residues, M1–R19, are a transit peptide targeting the mitochondrion. Residues V75, E123, and D149 each coordinate S-adenosyl-L-methionine. The DNA-binding stretch occupies residues K326 to R327.

This sequence belongs to the class I-like SAM-binding methyltransferase superfamily. rRNA adenine N(6)-methyltransferase family. KsgA subfamily. In terms of assembly, homodimer. Component of the mitochondrial transcription initiation complex, composed at least of TFB2M, TFAM and POLRMT. In this complex TFAM recruits POLRMT to the promoter whereas TFB2M induces structural changes in POLRMT to enable promoter opening and trapping of the DNA non-template strand. Interacts with mitochondrial RNA polymerase POLRMT. Interacts with TFAM.

It localises to the mitochondrion. It carries out the reaction adenosine in rRNA + S-adenosyl-L-methionine = N(6)-methyladenosine in rRNA + S-adenosyl-L-homocysteine + H(+). In terms of biological role, S-adenosyl-L-methionine-dependent rRNA methyltransferase which may methylate two specific adjacent adenosines in the loop of a conserved hairpin near the 3'-end of 12S mitochondrial rRNA. Component of the mitochondrial transcription initiation complex, composed at least of TFB2M, TFAM and POLRMT that is required for basal transcription of mitochondrial DNA. In this complex TFAM recruits POLRMT to a specific promoter whereas TFB2M induces structural changes in POLRMT to enable promoter opening and trapping of the DNA non-template strand. Stimulates transcription independently of the methyltransferase activity. The sequence is that of Dimethyladenosine transferase 2, mitochondrial from Bos taurus (Bovine).